The primary structure comprises 156 residues: Small ribosomal subunit protein uS7 (156 aa).

Belongs to the universal ribosomal protein uS7 family. As to quaternary structure, part of the 30S ribosomal subunit. Contacts proteins S9 and S11.

In terms of biological role, one of the primary rRNA binding proteins, it binds directly to 16S rRNA where it nucleates assembly of the head domain of the 30S subunit. Is located at the subunit interface close to the decoding center, probably blocks exit of the E-site tRNA. This chain is Small ribosomal subunit protein uS7, found in Onion yellows phytoplasma (strain OY-M).